A 401-amino-acid chain; its full sequence is Nicotinate phosphoribosyltransferase (401 aa).

Histidine 221 bears the Phosphohistidine; by autocatalysis mark.

It belongs to the NAPRTase family. Post-translationally, transiently phosphorylated on a His residue during the reaction cycle. Phosphorylation strongly increases the affinity for substrates and increases the rate of nicotinate D-ribonucleotide production. Dephosphorylation regenerates the low-affinity form of the enzyme, leading to product release.

It carries out the reaction nicotinate + 5-phospho-alpha-D-ribose 1-diphosphate + ATP + H2O = nicotinate beta-D-ribonucleotide + ADP + phosphate + diphosphate. It participates in cofactor biosynthesis; NAD(+) biosynthesis; nicotinate D-ribonucleotide from nicotinate: step 1/1. Catalyzes the synthesis of beta-nicotinate D-ribonucleotide from nicotinate and 5-phospho-D-ribose 1-phosphate at the expense of ATP. The sequence is that of Nicotinate phosphoribosyltransferase from Yersinia pseudotuberculosis serotype O:1b (strain IP 31758).